The primary structure comprises 83 residues: MSDNTVLAPPTSNQGPTTPRKGPPKFKQRQTRQFKSKPPKKGVKGFGDDIPGMEGLGTDITVICPWEAFSHLELHELAQFGII.

Residues 1–17 (MSDNTVLAPPTSNQGPT) are compositionally biased toward polar residues. The interval 1 to 51 (MSDNTVLAPPTSNQGPTTPRKGPPKFKQRQTRQFKSKPPKKGVKGFGDDIP) is disordered. Basic residues predominate over residues 22 to 43 (GPPKFKQRQTRQFKSKPPKKGV).

Belongs to the rod/cone cGMP-PDE gamma subunit family. As to quaternary structure, tetramer composed of two catalytic chains (alpha and beta), and two inhibitory chains (gamma).

It carries out the reaction 3',5'-cyclic GMP + H2O = GMP + H(+). Participates in processes of transmission and amplification of the visual signal. cGMP-PDEs are the effector molecules in G-protein-mediated phototransduction in vertebrate rods and cones. The polypeptide is Retinal cone rhodopsin-sensitive cGMP 3',5'-cyclic phosphodiesterase subunit gamma (PDE6H) (Bos taurus (Bovine)).